We begin with the raw amino-acid sequence, 131 residues long: Actin-associated protein FAM107A (131 aa).

The stretch at 57–77 (VLEHRRRNQLIKKKEEELEAK) forms a coiled coil. Positions 61 to 71 (RRRNQLIKKKE) match the Nuclear localization signal motif.

In terms of assembly, interacts with ACTB. Interacts with COMMD1; this interaction stabilizes COMMD1 in the nucleus. Interacts with MAP1A. Interacts with PRDX1. Interacts with F-actin.

The protein localises to the nucleus. Its subcellular location is the cytoplasm. It localises to the cytoskeleton. It is found in the stress fiber. The protein resides in the cell junction. The protein localises to the focal adhesion. Its subcellular location is the cell projection. It localises to the ruffle membrane. It is found in the synapse. In terms of biological role, stress-inducible actin-binding protein that plays a role in synaptic and cognitive functions by modulating actin filamentous (F-actin) dynamics. Mediates polymerization of globular actin to F-actin. Also binds to, stabilizes and bundles F-actin. Involved in synaptic function by regulating neurite outgrowth in an actin-dependent manner and for the acquisition of hippocampus-dependent cognitive function, such as learning and long-term memory. Plays a role in the actin and microtubule cytoskeleton organization; negatively regulates focal adhesion (FA) assembly promoting malignant glial cell migration in an actin-, microtubule- and MAP1A-dependent manner. Also involved in neuroblastoma G1/S phase cell cycle progression and cell proliferation inhibition by stimulating ubiquitination of NF-kappa-B subunit RELA and NF-kappa-B degradation in a COMMD1- and actin-dependent manner. May play a role in tumor development. This Rattus norvegicus (Rat) protein is Actin-associated protein FAM107A.